A 284-amino-acid polypeptide reads, in one-letter code: 4-hydroxybenzoate octaprenyltransferase (284 aa).

The next 9 helical transmembrane spans lie at Ile19–Leu39, Ile42–Ile62, Gly85–Ile105, Val107–Leu127, Phe134–Phe154, Ala165–Leu185, Ile211–Phe231, Ser233–Tyr253, and Cys261–Ile281.

Belongs to the UbiA prenyltransferase family. It depends on Mg(2+) as a cofactor.

It localises to the cell inner membrane. It catalyses the reaction all-trans-octaprenyl diphosphate + 4-hydroxybenzoate = 4-hydroxy-3-(all-trans-octaprenyl)benzoate + diphosphate. The protein operates within cofactor biosynthesis; ubiquinone biosynthesis. Its function is as follows. Catalyzes the prenylation of para-hydroxybenzoate (PHB) with an all-trans polyprenyl group. Mediates the second step in the final reaction sequence of ubiquinone-8 (UQ-8) biosynthesis, which is the condensation of the polyisoprenoid side chain with PHB, generating the first membrane-bound Q intermediate 3-octaprenyl-4-hydroxybenzoate. The polypeptide is 4-hydroxybenzoate octaprenyltransferase (Francisella tularensis subsp. holarctica (strain LVS)).